A 159-amino-acid chain; its full sequence is MQGDPDVLRLLNEQLTSELTAINQYFLHSKMQDNWGFTELAAHTRAESFDEMRHAEEITDRILLLDGLPNYQRIGSLRIGQTLREQFEADLAIEYDVLNRLKPGIVMCREKQDTTSAVLLEKIVADEEEHIDYLETQLELMDKLGEELYSAQCVSRPPT.

Positions 1–145 (MQGDPDVLRL…TQLELMDKLG (145 aa)) constitute a Ferritin-like diiron domain. Fe cation-binding residues include Glu18 and Glu51. Position 52 (Met52) interacts with heme b. The Fe cation site is built by His54, Glu94, Glu127, and His130.

Belongs to the bacterioferritin family. Homooligomer of 24 subunits, arranged as 12 dimers, that are packed together to form an approximately spherical molecule with a central cavity, in which large amounts of iron can be deposited. It depends on heme b as a cofactor.

The catalysed reaction is 4 Fe(2+) + O2 + 4 H(+) = 4 Fe(3+) + 2 H2O. It catalyses the reaction Fe(2+)(in) = Fe(2+)(out). Functionally, iron-storage protein, whose ferroxidase center binds Fe(2+), oxidizes it using dioxygen to Fe(3+), and participates in the subsequent Fe(3+) oxide mineral core formation within the central cavity of the BFR protein shell. The protein is Bacterioferritin (bfr) of Mycobacterium bovis (strain ATCC BAA-935 / AF2122/97).